We begin with the raw amino-acid sequence, 281 residues long: Nucleoid occlusion protein (281 aa).

Residues 1–24 (MKHPFSRLFSFGEKEQEEMEEKQE) form a disordered region. A DNA-binding region (H-T-H motif) is located at residues 145-164 (EALAQRLGKGQSTIANKLRL).

It belongs to the ParB family.

Its subcellular location is the cytoplasm. It is found in the nucleoid. In terms of biological role, effects nucleoid occlusion by binding relatively nonspecifically to DNA and preventing the assembly of the division machinery in the vicinity of the nucleoid, especially under conditions that disturb the cell cycle. It helps to coordinate cell division and chromosome segregation by preventing the formation of the Z ring through the nucleoid, which would cause chromosome breakage. The chain is Nucleoid occlusion protein from Geobacillus kaustophilus (strain HTA426).